The following is a 352-amino-acid chain: MTIAVGRAPAERGWFDVLDDWLKRDRYVFVGWSGLLLFPCAYLALGGWLTGTSFVTSWYTHGIASSYLEGGNFLTVAVSTPADAFGHSLMLLWGPEAQGNFVRWCQLGGLWNFVALHGAFGLIGFMLRQFEIARLVGVRPYNAIAFSGPIAVFVSVFLMYPLGQSSWFFAPSFGVAAIFRFLLFLQGFHNWTLNPFHMMGVAGILGGALLCAIHGATVENTLFEDSEQSNTFRAFEPTQAEETYSMVTANRFWSQIFGIAFSNKRWLHFFMLFVPVTGLWMSSIGIVGLALNLRAYDFVSQELRAAEDPEFETFYTKNILLNEGIRAWMAPQDQPHEKFVFPEEVLPRGNAL.

Residues 40–60 (CAYLALGGWLTGTSFVTSWYT) form a helical membrane-spanning segment. His-117 lines the chlorophyll a pocket. The chain crosses the membrane as a helical span at residues 124 to 140 (GFMLRQFEIARLVGVRP). Pheophytin a contacts are provided by Gln-129 and Asn-142. Residues 152–165 (VFVSVFLMYPLGQS) traverse the membrane as a helical segment. Chlorophyll a is bound at residue His-197. Residues 207 to 227 (GALLCAIHGATVENTLFEDSE) form a helical membrane-spanning segment. Residues His-214 and Phe-261 each contribute to the a plastoquinone site. A Fe cation-binding site is contributed by His-214. Fe cation is bound at residue His-268. Residues 278 to 294 (GLWMSSIGIVGLALNLR) form a helical membrane-spanning segment.

It belongs to the reaction center PufL/M/PsbA/D family. In terms of assembly, PSII is composed of 1 copy each of membrane proteins PsbA, PsbB, PsbC, PsbD, PsbE, PsbF, PsbH, PsbI, PsbJ, PsbK, PsbL, PsbM, PsbT, PsbX, PsbY, PsbZ, Psb30/Ycf12, peripheral proteins PsbO, CyanoQ (PsbQ), PsbU, PsbV and a large number of cofactors. It forms dimeric complexes. It depends on The D1/D2 heterodimer binds P680, chlorophylls that are the primary electron donor of PSII, and subsequent electron acceptors. It shares a non-heme iron and each subunit binds pheophytin, quinone, additional chlorophylls, carotenoids and lipids. There is also a Cl(-1) ion associated with D1 and D2, which is required for oxygen evolution. The PSII complex binds additional chlorophylls, carotenoids and specific lipids. as a cofactor.

It localises to the cellular thylakoid membrane. It catalyses the reaction 2 a plastoquinone + 4 hnu + 2 H2O = 2 a plastoquinol + O2. Photosystem II (PSII) is a light-driven water:plastoquinone oxidoreductase that uses light energy to abstract electrons from H(2)O, generating O(2) and a proton gradient subsequently used for ATP formation. It consists of a core antenna complex that captures photons, and an electron transfer chain that converts photonic excitation into a charge separation. The D1/D2 (PsbA/PsbD) reaction center heterodimer binds P680, the primary electron donor of PSII as well as several subsequent electron acceptors. D2 is needed for assembly of a stable PSII complex. The chain is Photosystem II D2 protein 2 from Synechococcus sp. (strain ATCC 27144 / PCC 6301 / SAUG 1402/1) (Anacystis nidulans).